The sequence spans 151 residues: UPF0756 membrane protein Dred_1097 (151 aa).

4 consecutive transmembrane segments (helical) span residues 6-26 (IILL…LATA), 52-72 (VGLI…NIVY), 75-95 (LVMK…TLAT), and 111-131 (LIFG…GIPI).

It belongs to the UPF0756 family.

The protein localises to the cell membrane. In Desulforamulus reducens (strain ATCC BAA-1160 / DSM 100696 / MI-1) (Desulfotomaculum reducens), this protein is UPF0756 membrane protein Dred_1097.